Here is a 721-residue protein sequence, read N- to C-terminus: MEGQNKSITFDGREIRLTTGLYAPQASGSVMIECGDTSLLVTATKTTKKEASDFLPLICDYEEKLYAAGRIPGGFMRREGRPPERATLISRLIDRPMRPLFPTWMRDEIQIVASCLSLDERVPADVLAVTGASIATLLGEIPFYGPMAAVRVGLIGDDFILNPSYREIEKGDLDIVVAGSPDGIVMIEAGANQLSEQDTIEAIDFGYEAVTELIKSQEDLLKDLGIKQIKPSDPEEDKTLPSYLEKNCSKAIDLVLKKFDQSKEERDLELEKIKTETQSKIDSLKDDNEVRVLTSENEKLIHSDFKKLTKKLMRSQIINDGKRVDGRELDEVRKITASAGILPKRVHGSALFQRGLTQVLSTTTLGTPSDAQEMDDLNPSTEKTYLHHYNFPPYSVGETRPMRTPGRREIGHGALAERAIIPVLPGKETFPYVLRVVSEVLSSNGSTSMGSVCGSTLSLLDAGVPLKAPVGGTAMGLIKEGKDVRILTDIQGIEDFLGDMDFKVAGTNKGITALQMDMKITGLPVSIISDAIKKARPARLHILEKMQEAIDKPQESLSPHAPRLLSFRIDPELIGTVIGPGGRTIKGITERTNTKIDIEDGGIVTIASHDGAAAEEAQKIIEGLTRKVHEGEIFSGVVTRIIPIGAFVEILPGKEGMVHISQLSEARVERVEDVVRQGDEVTVRVREIDSRGRINLTLRGVGQNNGMSYPEPTPTPVAPLN.

2 residues coordinate Mg(2+): aspartate 495 and aspartate 501. In terms of domain architecture, KH spans 562–621 (PRLLSFRIDPELIGTVIGPGGRTIKGITERTNTKIDIEDGGIVTIASHDGAAAEEAQKII). The 69-residue stretch at 631–699 (GEIFSGVVTR…SRGRINLTLR (69 aa)) folds into the S1 motif domain. The segment at 701–721 (VGQNNGMSYPEPTPTPVAPLN) is disordered. A compositionally biased stretch (pro residues) spans 711-721 (EPTPTPVAPLN).

Belongs to the polyribonucleotide nucleotidyltransferase family. It depends on Mg(2+) as a cofactor.

It is found in the cytoplasm. The catalysed reaction is RNA(n+1) + phosphate = RNA(n) + a ribonucleoside 5'-diphosphate. Its function is as follows. Involved in mRNA degradation. Catalyzes the phosphorolysis of single-stranded polyribonucleotides processively in the 3'- to 5'-direction. The polypeptide is Polyribonucleotide nucleotidyltransferase (Prochlorococcus marinus (strain MIT 9215)).